A 137-amino-acid chain; its full sequence is Probable histone H2AXa (137 aa).

The segment covering 1–10 (MSSSQGGGGR) has biased composition (gly residues). A disordered region spans residues 1–21 (MSSSQGGGGRGKAKTTKAVSR). Position 134 is a phosphoserine; by ATM and ATR (Ser134). Residues 134–135 (SQ) carry the [ST]-Q motif motif.

This sequence belongs to the histone H2A family. The nucleosome is a histone octamer containing two molecules each of H2A, H2B, H3 and H4 assembled in one H3-H4 heterotetramer and two H2A-H2B heterodimers. The octamer wraps approximately 147 bp of DNA. Interacts with numerous proteins required for DNA damage signaling and repair when phosphorylated on Ser-134. Post-translationally, phosphorylated to form H2AXS139ph (gamma-H2AX) in response to DNA double strand breaks (DSBs) generated by exogenous genotoxic agents and by stalled replication forks, and may also occur during meiotic recombination events. Phosphorylation can extend up to several thousand nucleosomes from the actual site of the DSB and may mark the surrounding chromatin for recruitment of proteins required for DNA damage signaling and repair. Widespread phosphorylation may also serve to amplify the damage signal or aid repair of persistent lesions. H2AXS139ph in response to ionizing radiation is mediated by ATM while defects in DNA replication induce H2AXS139ph subsequent to activation of ATR. Dephosphorylation of H2AXS139ph by PP2A is required for DNA DSB repair.

It localises to the nucleus. The protein localises to the chromosome. In terms of biological role, variant histone H2A which replaces conventional H2A in a subset of nucleosomes. Nucleosomes wrap and compact DNA into chromatin, limiting DNA accessibility to the cellular machineries which require DNA as a template. Histones thereby play a central role in transcription regulation, DNA repair, DNA replication and chromosomal stability. DNA accessibility is regulated via a complex set of post-translational modifications of histones, also called histone code, and nucleosome remodeling. Required for checkpoint-mediated arrest of cell cycle progression in response to low doses of ionizing radiation and for efficient repair of DNA double strand breaks (DSBs) specifically when modified by C-terminal phosphorylation. The sequence is that of Probable histone H2AXa from Oryza sativa subsp. indica (Rice).